The chain runs to 32 residues: MASEIFGTAAVFWVLIPVGLLGGAILLKLQGD.

A helical membrane pass occupies residues 9 to 27 (AAVFWVLIPVGLLGGAILL).

The protein belongs to the PetM family. In terms of assembly, the 4 large subunits of the cytochrome b6-f complex are cytochrome b6, subunit IV (17 kDa polypeptide, PetD), cytochrome f and the Rieske protein, while the 4 small subunits are PetG, PetL, PetM and PetN. The complex functions as a dimer.

It is found in the cellular thylakoid membrane. Component of the cytochrome b6-f complex, which mediates electron transfer between photosystem II (PSII) and photosystem I (PSI), cyclic electron flow around PSI, and state transitions. This chain is Cytochrome b6-f complex subunit 7, found in Prochlorococcus marinus (strain MIT 9211).